Reading from the N-terminus, the 438-residue chain is Elongation factor 1-alpha (438 aa).

The tr-type G domain occupies 6 to 229 (KPHLNIVIIG…ALDTLEVPPK (224 aa)). The segment at 15-22 (GHVDHGKS) is G1. 15–22 (GHVDHGKS) lines the GTP pocket. Ser-22 contacts Mg(2+). Positions 71–75 (GVTIS) are G2. Positions 92–95 (DAPG) are G3. Residues 92 to 96 (DAPGH) and 154 to 157 (NKMD) each bind GTP. The segment at 154–157 (NKMD) is G4. The segment at 195–197 (SAW) is G5.

The protein belongs to the TRAFAC class translation factor GTPase superfamily. Classic translation factor GTPase family. EF-Tu/EF-1A subfamily.

The protein resides in the cytoplasm. It carries out the reaction GTP + H2O = GDP + phosphate + H(+). Its function is as follows. GTP hydrolase that promotes the GTP-dependent binding of aminoacyl-tRNA to the A-site of ribosomes during protein biosynthesis. In Desulfurococcus mucosus (Desulfurococcus mobilis), this protein is Elongation factor 1-alpha.